A 402-amino-acid chain; its full sequence is MKISLFGYGKTTRAIAENLVDKFGPFDIYDDHFIETKKDTLGNLLLNPNDFDDNLSDIEIPSPGFPPKHKLIQKAKNLQSEYDFFYDIMPKSVWISGTNGKTTTTQMATHLLSHIGAVMGGNVGTPLAELDPYAKLWILETSSFTLHYTHKAKPEIYALLPISPDHLSWHGSFDNYVQDKLSVLKRMNECDVAILPKIYANTPTKAHKISYEDEKDLAVKFGIDTEKISFKSPFLLDAIMALAIEKILLDTLSYELLNSFVMEKNKLEELKDSQNRLWVNDTKATNESAVMAALNRYKDKKIHLIIGGDDKGVDLSNLFDFMKNFNIELYAIGISTEKMLDYAKKANLKAYKCEVLSKAVNEISNHLRVNEVALLSPACASLDQFNSYAERGKVFKECVNKI.

97 to 103 (GTNGKTT) is an ATP binding site.

It belongs to the MurCDEF family.

The protein resides in the cytoplasm. It carries out the reaction UDP-N-acetyl-alpha-D-muramoyl-L-alanine + D-glutamate + ATP = UDP-N-acetyl-alpha-D-muramoyl-L-alanyl-D-glutamate + ADP + phosphate + H(+). Its pathway is cell wall biogenesis; peptidoglycan biosynthesis. Functionally, cell wall formation. Catalyzes the addition of glutamate to the nucleotide precursor UDP-N-acetylmuramoyl-L-alanine (UMA). The chain is UDP-N-acetylmuramoylalanine--D-glutamate ligase from Campylobacter jejuni subsp. jejuni serotype O:23/36 (strain 81-176).